The following is a 469-amino-acid chain: Glutamate--tRNA ligase (469 aa).

The short motif at 9 to 19 is the 'HIGH' region element; that stretch reads PSPTGFLHVGG. Cysteine 98, cysteine 100, cysteine 125, and aspartate 127 together coordinate Zn(2+). Positions 236-240 match the 'KMSKS' region motif; that stretch reads KLSKR. Lysine 239 contributes to the ATP binding site.

It belongs to the class-I aminoacyl-tRNA synthetase family. Glutamate--tRNA ligase type 1 subfamily. Monomer. It depends on Zn(2+) as a cofactor.

The protein resides in the cytoplasm. It catalyses the reaction tRNA(Glu) + L-glutamate + ATP = L-glutamyl-tRNA(Glu) + AMP + diphosphate. Catalyzes the attachment of glutamate to tRNA(Glu) in a two-step reaction: glutamate is first activated by ATP to form Glu-AMP and then transferred to the acceptor end of tRNA(Glu). The sequence is that of Glutamate--tRNA ligase from Shewanella sediminis (strain HAW-EB3).